Reading from the N-terminus, the 663-residue chain is Ankyrin repeat and SAM domain-containing protein 3 (663 aa).

Positions 1–421 are interaction with NEK7; the sequence is MSELSDEASE…PGSEPQAEKS (421 aa). Ser2 and Ser5 each carry phosphoserine. ANK repeat units follow at residues 34–64, 68–97, 101–130, 134–163, 168–197, and 201–220; these read DVPLDLHTAASIGQYEVVKECVQRRELDLNK, GGWTPLMYASYIGHDTIVHLLLEAGVSVNV, EGQTPLMLASSCGNESIAYFLLQQGAELEM, QGWTALFHCTSAGHQQMVKFLLESGANANV, YGFTPLMEAAAAGHEIIVQYFLNHGVKVDT, and SGATARMLAKQYGHMKIVAL. 3-hydroxyasparagine is present on Asn96. Phosphoserine is present on residues Ser201, Ser225, Ser243, Ser244, and Ser245. Disordered stretches follow at residues 242–261 and 278–425; these read LSSSDESWPVPQRQRPCRKK and TGLG…PYSG. Thr318 is modified (phosphothreonine). A Phosphoserine modification is found at Ser319. Positions 322 to 337 are enriched in basic and acidic residues; the sequence is NERDVESSSSSSREEP. Ser366, Ser369, and Ser373 each carry phosphoserine. Over residues 378–395 the composition is skewed to basic residues; the sequence is KSSVRKQTRTYLKNKSRH. The region spanning 424–487 is the SAM domain; that stretch reads SGPQDLATLL…TSAIARWHSS (64 aa). Residues 500 to 575 are a coiled coil; sequence ADRLEAEMQE…AALVLDQLRA (76 aa). A Phosphoserine modification is found at Ser540. Disordered stretches follow at residues 585–604 and 637–663; these read KQHHSPSEATQNPPFLPADS and AEPGETTDAEWEEMEGTIARRDDSDVG. The span at 641 to 651 shows a compositional bias: acidic residues; that stretch reads ETTDAEWEEME. Residues 654–663 show a composition bias toward basic and acidic residues; that stretch reads IARRDDSDVG.

As to quaternary structure, homooligomer. Interacts (via SAM domain) with ANKS6 (via SAM domain). Interacts with BICC1. Interacts with NPHP1. Interacts with NEK8. Interacts with HIF1AN. Interacts with NEK7; this interaction alters the subcellular distribution of NEK7 by preventing its nuclear translocation. In terms of processing, hydroxylated at Asn-96, most probably by HIF1AN. Post-translationally, phosphorylations at Ser-5, Ser-225, Thr-318, Ser-319, Ser-366 and Ser-369 occur in a NEK7-dependent manner. Polyubiquitinated.

Its subcellular location is the cell projection. It is found in the cilium. The protein resides in the cytoplasm. May be involved in vasopressin signaling in the kidney. The polypeptide is Ankyrin repeat and SAM domain-containing protein 3 (Anks3) (Rattus norvegicus (Rat)).